We begin with the raw amino-acid sequence, 305 residues long: Mitochondrial distribution and morphology protein 12 (305 aa).

The 236-residue stretch at 1–236 (MSVEIDWDNI…WPSWIDLDFT (236 aa)) folds into the SMP-LTD domain. Positions 233 to 305 (LDFTPEDPED…RVNSNTSLEE (73 aa)) are disordered. The segment covering 235–248 (FTPEDPEDPEEEGR) has biased composition (acidic residues). The segment covering 258–269 (NDGKDIEMKSGT) has biased composition (basic and acidic residues). The span at 279-305 (ESVQHVSPAVTSIDQESRVNSNTSLEE) shows a compositional bias: polar residues.

Belongs to the MDM12 family. As to quaternary structure, component of the ER-mitochondria encounter structure (ERMES) or MDM complex, composed of MMM1, MDM10, MDM12 and MDM34. An MMM1 homodimer associates with one molecule of MDM12 on each side in a pairwise head-to-tail manner, and the SMP-LTD domains of MMM1 and MDM12 generate a continuous hydrophobic tunnel for phospholipid trafficking.

It localises to the mitochondrion outer membrane. Its subcellular location is the endoplasmic reticulum membrane. Component of the ERMES/MDM complex, which serves as a molecular tether to connect the endoplasmic reticulum (ER) and mitochondria. Components of this complex are involved in the control of mitochondrial shape and protein biogenesis, and function in nonvesicular lipid trafficking between the ER and mitochondria. MDM12 is required for the interaction of the ER-resident membrane protein MMM1 and the outer mitochondrial membrane-resident beta-barrel protein MDM10. The MDM12-MMM1 subcomplex functions in the major beta-barrel assembly pathway that is responsible for biogenesis of all mitochondrial outer membrane beta-barrel proteins, and acts in a late step after the SAM complex. The MDM10-MDM12-MMM1 subcomplex further acts in the TOM40-specific pathway after the action of the MDM12-MMM1 complex. Essential for establishing and maintaining the structure of mitochondria and maintenance of mtDNA nucleoids. The sequence is that of Mitochondrial distribution and morphology protein 12 from Kluyveromyces lactis (strain ATCC 8585 / CBS 2359 / DSM 70799 / NBRC 1267 / NRRL Y-1140 / WM37) (Yeast).